Here is a 1260-residue protein sequence, read N- to C-terminus: Paraclostridial mosquitocidal protein 1 (1260 aa).

His208 lines the Zn(2+) pocket. Glu209 functions as the Proton acceptor in the catalytic mechanism. The Zn(2+) site is built by His212 and Glu248. A disulfide bond links Cys395 and Cys406. Residues 401 to 824 (NRVNICIDVN…NIQSIPDFDI (424 aa)) form a translocation domain (TD) region. Residues 825–1065 (NALIDRLGIQ…SYFNSNILRD (241 aa)) are HCN. The tract at residues 1066–1260 (FWGEPLEYNK…FVSEDEGWKE (195 aa)) is HCC.

It belongs to the peptidase M27 family. Zn(2+) serves as cofactor.

The enzyme catalyses Limited hydrolysis of proteins of the neuroexocytosis apparatus, synaptobrevins, SNAP25 or syntaxin. No detected action on small molecule substrates.. Preincubation with the metalloprotease inhibitor 1,10-phenanthroline before injection into Anopheles or Aedes decreases toxicity. Its function is as follows. Neurotoxin active against Anopheles but not Aedes mosquitoes upon oral ingestion; expression of the ptox operon (ntnh-orfX1-orfX2-orfX3-pmp1) in B.thuringiensis kills Anopheles but not Aedes mosquito 3rd instar larvae. The ntnh-pmp1 construct is about half as toxic. PMP1 is toxic when injected directly into Anopheles or Aedes mosquito 3rd instar larvae, larvae no longer move, suggesting they are paralyzed. Adult mosquitoes (Anopheles or Aedes) and Drosophila lose the ability to fly in a dose-dependent manner by 24 hours after injection with 100 pg neurotoxin. Not toxic upon injection in mice. In terms of biological role, neurotoxin that cleaves A.gambiae syntaxin 1a, probably hydrolyzing the '240-Glu-|-His-241' bond. Does not cleave A.gambiae n-synaptobrevin or SNAP-25, nor human syntaxin 1A. Responsible for host epithelial cell transcytosis, host nerve cell targeting and translocation of PMP1 light chain (LC) into host cytosol. Composed of 3 subdomains; the translocation domain (TD), and N-terminus and C-terminus of the receptor-binding domain (RBD), called HCN and HCC. This chain is Paraclostridial mosquitocidal protein 1, found in Paraclostridium bifermentans (Clostridium bifermentans).